The sequence spans 975 residues: Nesprin-3 (975 aa).

Residues 1-925 (MTQQPQEDFE…PCSLLQKACR (925 aa)) are Cytoplasmic-facing. Spectrin repeat units lie at residues 220–325 (QDHE…RLRG) and 647–740 (REHC…QALR). The segment at 778–798 (LINPQDPIPRRQHGANPLEGH) is disordered. Positions 917–975 (CSLLQKACRVALPLQLLLLLFLLLLFLLPAGEEERSCALANNFARSFALMLRYNGPPPT) constitute a KASH domain. The helical; Anchor for type IV membrane protein transmembrane segment at 926 to 946 (VALPLQLLLLLFLLLLFLLPA) threads the bilayer. Residues 947-975 (GEEERSCALANNFARSFALMLRYNGPPPT) lie on the Perinuclear space side of the membrane.

The protein belongs to the nesprin family. In terms of assembly, core component of LINC complexes which are composed of inner nuclear membrane SUN domain-containing proteins coupled to outer nuclear membrane KASH domain-containing nesprins. SUN and KASH domain-containing proteins seem to bind each other promiscuously; however, differentially expression of LINC complex constituents can give rise to specific assemblies. Interacts with SUN1 and SUN2; probably forming respective LINC complexes. Interacts with PLEC (via actin-binding domain). Interacts with DST. Interacts with SYNE1. Interacts (via KASH domain) with TOR1A (ATP-bound); the interaction is required for SYNE3 nuclear envelope localization. The disulfid bond with SUN1 or SUN2 is required for stability of the respective LINC complex under tensile forces. Ubiquitous.

It localises to the nucleus outer membrane. Its subcellular location is the nucleus envelope. The protein resides in the rough endoplasmic reticulum. Functionally, as a component of the LINC (LInker of Nucleoskeleton and Cytoskeleton) complex involved in the connection between the nuclear lamina and the cytoskeleton. The nucleocytoplasmic interactions established by the LINC complex play an important role in the transmission of mechanical forces across the nuclear envelope and in nuclear movement and positioning. Probable anchoring protein which tethers the nucleus to the cytoskeleton by binding PLEC which can associate with the intermediate filament system. Plays a role in the regulation of aortic epithelial cell morphology, and is required for flow-induced centrosome polarization and directional migration in aortic endothelial cells. This chain is Nesprin-3 (Syne3), found in Mus musculus (Mouse).